The sequence spans 20 residues: Apidaecin 3+ (20 aa).

Residues 1 to 20 are disordered; that stretch reads GKPSRPRPAPIQPRPPHPRL.

Belongs to the apidaecin family.

The protein resides in the secreted. Functionally, antimicrobial peptide active against many Gram-negative enterobacterial and plant-associated bacterial species. Not active against other bacterial species like H.pylori, P.mirabilis, B.pertussis or N.gonorrhoeae. In terms of biological role, among others, also active against S.typhi. Not active against S.typhi. This is Apidaecin 3+ from Pimpla disparis (Parasitic wasp).